The sequence spans 1195 residues: Voltage-gated inwardly rectifying potassium channel KCNH7 (1195 aa).

At M1 to W412 the chain is on the cytoplasmic side. The PAS domain maps to I41–H70. A PAC domain is found at R92–V144. A Phosphoserine modification is found at S174. The disordered stretch occupies residues S194–T216. Residues S238 and S319 each carry the phosphoserine modification. Residues L413–L433 traverse the membrane as a helical segment. Topologically, residues N434–S449 are extracellular. The helical transmembrane segment at P450–F470 threads the bilayer. The Cytoplasmic segment spans residues R471–K494. Residues G495–G515 form a helical membrane-spanning segment. Over S516–T521 the chain is Extracellular. The helical; Voltage-sensor transmembrane segment at L522–D542 threads the bilayer. Topologically, residues R543–A549 are cytoplasmic. Residues A550 to W570 form a helical membrane-spanning segment. Residues Y571–Y614 are Extracellular-facing. N-linked (GlcNAc...) asparagine glycosylation is present at N600. The segment at residues V615–P635 is an intramembrane region (pore-forming). The short motif at S627–N632 is the Selectivity filter element. Over N636–K641 the chain is Extracellular. Residues I642 to V662 form a helical membrane-spanning segment. At S663–K1195 the chain is on the cytoplasmic side. The interval A745 to L845 is cNMP-binding domain. Positions A870–T915 are disordered. The segment covering L890–K902 has biased composition (basic and acidic residues). Phosphoserine occurs at positions 891 and 894. Positions Y1027–A1054 form a coiled coil.

Belongs to the potassium channel family. H (Eag) (TC 1.A.1.20) subfamily. Kv11.3/KCNH7 sub-subfamily. As to quaternary structure, the potassium channel is probably composed of a homo- or heterotetrameric complex of pore-forming alpha subunits that can associate only within their subfamily.

It localises to the cell membrane. It catalyses the reaction K(+)(in) = K(+)(out). Functionally, pore-forming (alpha) subunit of voltage-gated inwardly rectifying potassium channel. Exhibits faster activation and deactivation kinetics and slow inactivation at membrane potentials positive to 240 mV, resulting in the weakest inward rectification. This Mus musculus (Mouse) protein is Voltage-gated inwardly rectifying potassium channel KCNH7.